The sequence spans 120 residues: ATP-dependent Clp protease adapter protein ClpS (120 aa).

The protein belongs to the ClpS family. In terms of assembly, binds to the N-terminal domain of the chaperone ClpA.

Functionally, involved in the modulation of the specificity of the ClpAP-mediated ATP-dependent protein degradation. In Pseudomonas fluorescens (strain ATCC BAA-477 / NRRL B-23932 / Pf-5), this protein is ATP-dependent Clp protease adapter protein ClpS.